The sequence spans 328 residues: 5,10-methylenetetrahydromethanopterin reductase (328 aa).

The protein belongs to the mer family.

The protein resides in the cytoplasm. It carries out the reaction 5-methyl-5,6,7,8-tetrahydromethanopterin + oxidized coenzyme F420-(gamma-L-Glu)(n) + H(+) = 5,10-methylenetetrahydromethanopterin + reduced coenzyme F420-(gamma-L-Glu)(n). It participates in one-carbon metabolism; methanogenesis from CO(2); methyl-coenzyme M from 5,10-methylene-5,6,7,8-tetrahydromethanopterin: step 1/2. In terms of biological role, catalyzes the reversible reduction of methylene-H(4)MPT to methyl-H(4)MPT. The protein is 5,10-methylenetetrahydromethanopterin reductase of Methanosarcina mazei (strain ATCC BAA-159 / DSM 3647 / Goe1 / Go1 / JCM 11833 / OCM 88) (Methanosarcina frisia).